The following is a 327-amino-acid chain: WRKY transcription factor WRKY76 (327 aa).

A coiled-coil region spans residues 56–76; the sequence is AKIVEAKVTQMSEENRRLTEV. Residues 87–135 are disordered; the sequence is RLGLDGSASPPRPVSPLSGKKRSRESMETANSCDANSNRHQGGDADHAE. Residues 106 to 112 carry the Nuclear localization signal motif; it reads KKRSRES. Residues 114-126 are compositionally biased toward polar residues; it reads ETANSCDANSNRH. A DNA-binding region (WRKY) is located at residues 160–226; sequence DTSLVVKDGY…YEGEHNHPHP (67 aa).

This sequence belongs to the WRKY group II-a family.

It is found in the nucleus. Its function is as follows. Transcription repressor. Interacts specifically with the W box (5'-(T)TGAC[CT]-3'), a frequently occurring elicitor-responsive cis-acting element. Regulates, probably indirectly, the activation of defense-related genes during defense response. Modulates plant innate immunity against X.oryzae pv. oryzae (Xoo). The protein is WRKY transcription factor WRKY76 of Oryza sativa subsp. japonica (Rice).